We begin with the raw amino-acid sequence, 266 residues long: Dihydropteroate synthase (266 aa).

In terms of domain architecture, Pterin-binding spans 12–260 (AAIMGILNVT…DVKANQDIVA (249 aa)). Residue Asn-19 participates in Mg(2+) binding. (7,8-dihydropterin-6-yl)methyl diphosphate-binding positions include Thr-59, Asp-93, Asn-112, Asp-176, Lys-212, and 248-250 (RVH).

It belongs to the DHPS family. Homodimer or homotrimer. Mg(2+) is required as a cofactor.

The enzyme catalyses (7,8-dihydropterin-6-yl)methyl diphosphate + 4-aminobenzoate = 7,8-dihydropteroate + diphosphate. It functions in the pathway cofactor biosynthesis; tetrahydrofolate biosynthesis; 7,8-dihydrofolate from 2-amino-4-hydroxy-6-hydroxymethyl-7,8-dihydropteridine diphosphate and 4-aminobenzoate: step 1/2. In terms of biological role, catalyzes the condensation of para-aminobenzoate (pABA) with 6-hydroxymethyl-7,8-dihydropterin diphosphate (DHPt-PP) to form 7,8-dihydropteroate (H2Pte), the immediate precursor of folate derivatives. The sequence is that of Dihydropteroate synthase (folP) from Streptococcus pyogenes serotype M3 (strain ATCC BAA-595 / MGAS315).